A 379-amino-acid chain; its full sequence is Probable leucine aminopeptidase TRV_05286 (379 aa).

An N-terminal signal peptide occupies residues 1 to 18; it reads MKIATLAVVSAFAATAIA. Residues H182 and D201 each coordinate Zn(2+). N-linked (GlcNAc...) asparagine glycans are attached at residues N202 and N226. The Zn(2+) site is built by E240 and D267. A disulfide bridge links C312 with C316. H345 provides a ligand contact to Zn(2+).

It belongs to the peptidase M28 family. M28E subfamily. As to quaternary structure, monomer. Zn(2+) is required as a cofactor.

Its subcellular location is the secreted. In terms of biological role, probable extracellular aminopeptidase which contributes to pathogenicity. The protein is Probable leucine aminopeptidase TRV_05286 of Trichophyton verrucosum (strain HKI 0517).